The primary structure comprises 482 residues: Proline--tRNA ligase (482 aa).

The protein belongs to the class-II aminoacyl-tRNA synthetase family. ProS type 3 subfamily. In terms of assembly, homodimer.

It localises to the cytoplasm. The enzyme catalyses tRNA(Pro) + L-proline + ATP = L-prolyl-tRNA(Pro) + AMP + diphosphate. In terms of biological role, catalyzes the attachment of proline to tRNA(Pro) in a two-step reaction: proline is first activated by ATP to form Pro-AMP and then transferred to the acceptor end of tRNA(Pro). This is Proline--tRNA ligase from Natronomonas pharaonis (strain ATCC 35678 / DSM 2160 / CIP 103997 / JCM 8858 / NBRC 14720 / NCIMB 2260 / Gabara) (Halobacterium pharaonis).